Reading from the N-terminus, the 471-residue chain is Putative multidrug resistance protein MdtD (471 aa).

13 consecutive transmembrane segments (helical) span residues 12-32 (LWIV…VNTA), 49-69 (MIIV…GWLA), 77-97 (IFFT…QAST), 102-124 (VMAR…LTVM), 138-158 (FVTL…GVLV), 165-185 (WIFL…LCLM), 195-215 (FDLS…LALD), 220-240 (LGIS…ALLL), 263-283 (FSLG…LPFM), 286-306 (VFLQ…MIPM), 329-351 (VLVA…ALAG), 393-413 (LLSM…GLLL), and 431-451 (VFLY…LIFS).

The protein belongs to the major facilitator superfamily. TCR/Tet family.

Its subcellular location is the cell inner membrane. The sequence is that of Putative multidrug resistance protein MdtD from Klebsiella pneumoniae subsp. pneumoniae (strain ATCC 700721 / MGH 78578).